The chain runs to 238 residues: Ion-translocating oxidoreductase complex subunit E (238 aa).

Transmembrane regions (helical) follow at residues Ala-20–Ala-40, Leu-41–Ile-61, Pro-72–Phe-92, Glu-95–Gly-115, Ala-130–Val-150, and Asn-185–Ala-205.

This sequence belongs to the NqrDE/RnfAE family. In terms of assembly, the complex is composed of six subunits: RnfA, RnfB, RnfC, RnfD, RnfE and RnfG.

The protein resides in the cell inner membrane. Part of a membrane-bound complex that couples electron transfer with translocation of ions across the membrane. In Cellvibrio japonicus (strain Ueda107) (Pseudomonas fluorescens subsp. cellulosa), this protein is Ion-translocating oxidoreductase complex subunit E.